A 395-amino-acid chain; its full sequence is Tyrosine--tRNA ligase 2 (395 aa).

Residues 42-51 (PTAPDIHLGH) carry the 'HIGH' region motif. A 'KMSKS' region motif is present at residues 226 to 230 (KMSKS). Lys-229 lines the ATP pocket. The region spanning 334–394 (TPVANLLKDA…GKRKFARITI (61 aa)) is the S4 RNA-binding domain.

This sequence belongs to the class-I aminoacyl-tRNA synthetase family. TyrS type 2 subfamily. Homodimer.

It localises to the cytoplasm. The enzyme catalyses tRNA(Tyr) + L-tyrosine + ATP = L-tyrosyl-tRNA(Tyr) + AMP + diphosphate + H(+). In terms of biological role, catalyzes the attachment of tyrosine to tRNA(Tyr) in a two-step reaction: tyrosine is first activated by ATP to form Tyr-AMP and then transferred to the acceptor end of tRNA(Tyr). The sequence is that of Tyrosine--tRNA ligase 2 from Vibrio parahaemolyticus serotype O3:K6 (strain RIMD 2210633).